The following is a 359-amino-acid chain: Methylthioribose-1-phosphate isomerase (359 aa).

Asp-235 serves as the catalytic Proton donor.

The protein belongs to the eIF-2B alpha/beta/delta subunits family. MtnA subfamily.

Its subcellular location is the cytoplasm. The protein resides in the nucleus. It catalyses the reaction 5-(methylsulfanyl)-alpha-D-ribose 1-phosphate = 5-(methylsulfanyl)-D-ribulose 1-phosphate. It participates in amino-acid biosynthesis; L-methionine biosynthesis via salvage pathway; L-methionine from S-methyl-5-thio-alpha-D-ribose 1-phosphate: step 1/6. In terms of biological role, catalyzes the interconversion of methylthioribose-1-phosphate (MTR-1-P) into methylthioribulose-1-phosphate (MTRu-1-P). The protein is Methylthioribose-1-phosphate isomerase (mri1) of Schizosaccharomyces pombe (strain 972 / ATCC 24843) (Fission yeast).